Reading from the N-terminus, the 332-residue chain is Galactinol synthase 7 (332 aa).

K101 is an active-site residue. The Mn(2+) site is built by D117, D119, and H255.

The protein belongs to the glycosyltransferase 8 family. Galactosyltransferase subfamily. The cofactor is a divalent metal cation.

The protein localises to the cytoplasm. The catalysed reaction is myo-inositol + UDP-alpha-D-galactose = alpha-D-galactosyl-(1-&gt;3)-1D-myo-inositol + UDP + H(+). Functionally, galactinol synthase involved in the biosynthesis of raffinose family oligosaccharides (RFOs) that function as osmoprotectants. May promote plant stress tolerance. The chain is Galactinol synthase 7 (GOLS7) from Arabidopsis thaliana (Mouse-ear cress).